Reading from the N-terminus, the 193-residue chain is Acyl-homoserine-lactone synthase (193 aa).

Belongs to the autoinducer synthase family.

The catalysed reaction is a fatty acyl-[ACP] + S-adenosyl-L-methionine = an N-acyl-L-homoserine lactone + S-methyl-5'-thioadenosine + holo-[ACP] + H(+). Its function is as follows. Required for the synthesis of OHHL (N-(3-oxohexanoyl)-L-homoserine lactone) also known as VAI or N-(beta-ketocaproyl)homoserine lactone or 3-oxo-N-(tetrahydro-2-oxo-3-furanyl)-hexanamide, an autoinducer molecule which binds to LuxR and thus acts in bioluminescence regulation. This Aliivibrio fischeri (Vibrio fischeri) protein is Acyl-homoserine-lactone synthase (luxI).